Consider the following 89-residue polypeptide: uncharacterized protein (89 aa).

This is an uncharacterized protein from Shigella flexneri.